The chain runs to 353 residues: Sulfate/thiosulfate import ATP-binding protein CysA (353 aa).

The 235-residue stretch at 3 to 237 (IQVKNIEKHF…PATPFVFDFL (235 aa)) folds into the ABC transporter domain. Residue 35 to 42 (GPSGCGKT) coordinates ATP.

This sequence belongs to the ABC transporter superfamily. Sulfate/tungstate importer (TC 3.A.1.6) family. As to quaternary structure, the complex is composed of two ATP-binding proteins (CysA), two transmembrane proteins (CysT and CysW) and a solute-binding protein (CysP).

The protein resides in the cell inner membrane. The enzyme catalyses sulfate(out) + ATP + H2O = sulfate(in) + ADP + phosphate + H(+). The catalysed reaction is thiosulfate(out) + ATP + H2O = thiosulfate(in) + ADP + phosphate + H(+). Part of the ABC transporter complex CysAWTP involved in sulfate/thiosulfate import. Responsible for energy coupling to the transport system. The polypeptide is Sulfate/thiosulfate import ATP-binding protein CysA (Acinetobacter baylyi (strain ATCC 33305 / BD413 / ADP1)).